We begin with the raw amino-acid sequence, 131 residues long: C-type natriuretic peptide 1 (131 aa).

The signal sequence occupies residues 1–22 (MLCPVLLCATLLLLTPFEVTEA). Positions 23 to 109 (RALHPSADAV…KRAEPDRSRR (87 aa)) are excised as a propeptide. Cys-115 and Cys-131 are disulfide-bonded.

The protein belongs to the natriuretic peptide family. In terms of tissue distribution, brain and spinal cord.

It is found in the secreted. Exhibits natriuretic and vasodepressant activity. Has cGMP-stimulating activity. May help to regulate body fluid homeostasis in a variety of aquatic environments. In Oryzias latipes (Japanese rice fish), this protein is C-type natriuretic peptide 1.